The following is a 348-amino-acid chain: Malyl-CoA/beta-methylmalyl-CoA/citramalyl-CoA lyase (348 aa).

Substrate-binding positions include His-32 to Phe-33, Lys-40, and Arg-92. The Mg(2+) site is built by Glu-157 and Asp-184. Residues Ala-183–Asp-184 and Leu-274 contribute to the substrate site.

The protein belongs to the HpcH/HpaI aldolase family. As to quaternary structure, homohexamer. Dimer of trimers. Requires Mg(2+) as cofactor. Mn(2+) serves as cofactor.

The catalysed reaction is (S)-malyl-CoA = glyoxylate + acetyl-CoA. It carries out the reaction (2R,3S)-beta-methylmalyl-CoA = propanoyl-CoA + glyoxylate. The enzyme catalyses (3S)-citramalyl-CoA = pyruvate + acetyl-CoA. Inhibited by oxalate. In terms of biological role, involved in the 3-hydroxypropionate cycle used for autotrophic carbon dioxide fixation, and in the glyoxylate assimilation cycle used to regenerate acetyl-CoA and produce pyruvate as universal precursor for biosynthesis. As a part of the 3-hydroxypropionate cycle, it catalyzes the cleavage of (S)-malyl-CoA to yield acetyl-CoA and glyoxylate. As part of the glyoxylate assimilation cycle, it catalyzes the condensation of glyoxylate with propionyl-CoA to yield (2R,3S)-beta-methylmalyl-CoA, and catalyzes the cleavage of (S)-citramalyl-CoA to yield acetyl-CoA and pyruvate. In Chloroflexus aurantiacus, this protein is Malyl-CoA/beta-methylmalyl-CoA/citramalyl-CoA lyase (mcl).